A 634-amino-acid chain; its full sequence is Chaperone protein HtpG (634 aa).

The a; substrate-binding stretch occupies residues 1 to 342; sequence MSVETQKETL…SNDLSLNVSR (342 aa). The tract at residues 343–559 is b; sequence EILQKDPIID…EQDLGLQMRQ (217 aa). The c stretch occupies residues 560-634; sequence ILEASGQKVP…LNKLLVELSV (75 aa).

This sequence belongs to the heat shock protein 90 family. In terms of assembly, homodimer.

The protein localises to the cytoplasm. Molecular chaperone. Has ATPase activity. The sequence is that of Chaperone protein HtpG from Pseudomonas fluorescens (strain ATCC BAA-477 / NRRL B-23932 / Pf-5).